We begin with the raw amino-acid sequence, 209 residues long: Large ribosomal subunit protein uL3 (209 aa).

The segment at 141–164 (RAVGSMGGSSDPSRTFKSKKMPGH) is disordered.

The protein belongs to the universal ribosomal protein uL3 family. As to quaternary structure, part of the 50S ribosomal subunit. Forms a cluster with proteins L14 and L19.

Its function is as follows. One of the primary rRNA binding proteins, it binds directly near the 3'-end of the 23S rRNA, where it nucleates assembly of the 50S subunit. The protein is Large ribosomal subunit protein uL3 of Clostridium acetobutylicum (strain ATCC 824 / DSM 792 / JCM 1419 / IAM 19013 / LMG 5710 / NBRC 13948 / NRRL B-527 / VKM B-1787 / 2291 / W).